The primary structure comprises 96 residues: Signal recognition particle 19 kDa protein (96 aa).

This sequence belongs to the SRP19 family. In terms of assembly, part of the signal recognition particle protein translocation system, which is composed of SRP and FtsY. Archaeal SRP consists of a 7S RNA molecule of 300 nucleotides and two protein subunits: SRP54 and SRP19.

The protein localises to the cytoplasm. Involved in targeting and insertion of nascent membrane proteins into the cytoplasmic membrane. Binds directly to 7S RNA and mediates binding of the 54 kDa subunit of the SRP. The protein is Signal recognition particle 19 kDa protein of Pyrobaculum arsenaticum (strain DSM 13514 / JCM 11321 / PZ6).